Reading from the N-terminus, the 224-residue chain is MQILLVEDDNTLFQELKKELEQWDFNVAGIEDFGKVMDTFESFNPEIVILDVQLPKYDGFYWCRKMREVSNVPILFLSSRDNPMDQVMSMELGADDYMQKPFYTNVLIAKLQAIYRRVYEFTAEEKRTLTWQDAIIDLSKDSIQKGDDTIFLSKTEMIILEILITKKNQIVSRDTIITALWDDEAFVSDNTLTVNVNRLRKKLSEISMDSAIETKVGKGYMAHE.

The 114-residue stretch at 2–115 (QILLVEDDNT…VLIAKLQAIY (114 aa)) folds into the Response regulatory domain. Position 51 is a 4-aspartylphosphate (aspartate 51). The ompR/PhoB-type DNA-binding region spans 126–224 (KRTLTWQDAI…KVGKGYMAHE (99 aa)). Phosphothreonine is present on residues threonine 128, threonine 130, and threonine 149.

As to quaternary structure, interacts with GraX. In terms of processing, phosphorylated by GraS. Phosphorylated by Stk1; phosphorylation increases the DNA-binding activity of GraR.

The protein localises to the cytoplasm. Its function is as follows. Member of the two-component regulatory system GraR/GraS involved in resistance against cationic antimicrobial peptides (CAMPs). Upon phosphorylation by GraS, functions as a transcription regulator by direct binding to promoter regions of target genes such as adhesins, exoproteins, transporters, toxins, and proteins involved in cell wall synthesis. Down-regulates the expression of many genes involved in RNA and amino acid synthesis or glycolysis. In Staphylococcus aureus (strain bovine RF122 / ET3-1), this protein is Response regulator protein GraR (graR).